Here is a 386-residue protein sequence, read N- to C-terminus: MYSVLKQSIRPRLLATHNQFRTMITAQAVLYTQHGEPKDVLFTQSFEIDDDNLAPNEVIVKTLGSPVNPSDINQIQGVYPSKPAKTTGFGTTEPAAPCGNEGLFEVIKVGSNVSSLEAGDWVIPSHVNFGTWRTHALGNDDDFIKLPNPAQSKANGKPNGLTINQGATISVNPLTAYLMLTHYVKLTPGKDWFIQNGGTSAVGKYASQIGKLLNFNSISVIRDRPNLDEVVASLKELGATQVITEDQNNSREFGPTIKEWIKQSGGEAKLALNCVGGKSSTGIARKLNNNGLMLTYGGMSFQPVTIPTSLYIFKNFTSAGFWVTELLKNNKELKTSTLNQIIAWYEEGKLTDAKSIETLYDGTKPLHELYQDGVANSKDGKQLITY.

The transit peptide at 1-22 directs the protein to the mitochondrion; it reads MYSVLKQSIRPRLLATHNQFRT. The active-site Proton donor is Tyr79. NADP(+)-binding positions include Asn172, 199-202, 222-224, 296-299, 321-323, and Lys381; these read TSAV, RDR, YGGM, and FWV.

Belongs to the zinc-containing alcohol dehydrogenase family. Quinone oxidoreductase subfamily. As to quaternary structure, homodimer and heterodimer with ETR2.

It is found in the mitochondrion. The catalysed reaction is a 2,3-saturated acyl-[ACP] + NADP(+) = a (2E)-enoyl-[ACP] + NADPH + H(+). It catalyses the reaction (2E,4E)-hexadienoyl-CoA + NADPH + H(+) = (4E)-hexenoyl-CoA + NADP(+). The enzyme catalyses (2E)-hexenoyl-CoA + NADPH + H(+) = hexanoyl-CoA + NADP(+). In terms of biological role, catalyzes the NADPH-dependent reduction of trans-2-enoyl thioesters in mitochondrial fatty acid synthesis (fatty acid synthesis type II). Fatty acid chain elongation in mitochondria uses acyl carrier protein (ACP) as an acyl group carrier, but the enzyme accepts both ACP and CoA thioesters as substrates in vitro. Required for respiration and the maintenance of the mitochondrial compartment. The polypeptide is Enoyl-[acyl-carrier-protein] reductase 1, mitochondrial (ETR1) (Candida tropicalis (Yeast)).